Reading from the N-terminus, the 236-residue chain is Small ribosomal subunit protein uS10m (236 aa).

The transit peptide at 1-24 (MMRQSIRPLRAFSSEVSWIARRTQ) directs the protein to the mitochondrion. The tract at residues 29 to 49 (KPGDLVPNKPEPSKNEQEPRF) is disordered. The segment covering 39-49 (EPSKNEQEPRF) has biased composition (basic and acidic residues).

It belongs to the universal ribosomal protein uS10 family. Part of the mitochondrial small ribosomal subunit.

Its subcellular location is the mitochondrion. Its function is as follows. Involved in mitochondrial genome encoded proteins translation. Involved in the binding of tRNA to the ribosomes. The chain is Small ribosomal subunit protein uS10m (RSM10) from Gibberella zeae (strain ATCC MYA-4620 / CBS 123657 / FGSC 9075 / NRRL 31084 / PH-1) (Wheat head blight fungus).